The chain runs to 430 residues: Glutamate-1-semialdehyde 2,1-aminomutase 2 (430 aa).

N6-(pyridoxal phosphate)lysine is present on Lys268.

The protein belongs to the class-III pyridoxal-phosphate-dependent aminotransferase family. HemL subfamily. As to quaternary structure, homodimer. The cofactor is pyridoxal 5'-phosphate.

The protein localises to the cytoplasm. It catalyses the reaction (S)-4-amino-5-oxopentanoate = 5-aminolevulinate. The protein operates within porphyrin-containing compound metabolism; protoporphyrin-IX biosynthesis; 5-aminolevulinate from L-glutamyl-tRNA(Glu): step 2/2. The polypeptide is Glutamate-1-semialdehyde 2,1-aminomutase 2 (Shouchella clausii (strain KSM-K16) (Alkalihalobacillus clausii)).